The sequence spans 315 residues: GTP cyclohydrolase MptA (315 aa).

Belongs to the GTP cyclohydrolase IV family. Homodimer. It depends on Fe(2+) as a cofactor.

It catalyses the reaction GTP + H2O = 7,8-dihydroneopterin 2',3'-cyclic phosphate + formate + diphosphate + H(+). The protein operates within cofactor biosynthesis; 5,6,7,8-tetrahydromethanopterin biosynthesis. Functionally, converts GTP to 7,8-dihydro-D-neopterin 2',3'-cyclic phosphate, the first intermediate in the biosynthesis of coenzyme methanopterin. The chain is GTP cyclohydrolase MptA from Methanococcus maripaludis (strain DSM 14266 / JCM 13030 / NBRC 101832 / S2 / LL).